The sequence spans 294 residues: Mating type protein mtA-1 (294 aa).

Positions 46-101 form a DNA-binding region, alpha box; it reads TAKKKVNGFMGFRSNYSPLFSYLPQKMRSPFMTILWQYDPYHNEWDFMCSVYSSIR.

This sequence belongs to the MATALPHA1 family.

The protein resides in the nucleus. Its function is as follows. Mating type proteins are sequence specific DNA-binding proteins that act as master switches in fungal differentiation by controlling gene expression in a cell type-specific fashion. Transcriptional activator that induces the transcription of alpha-specific genes. The polypeptide is Mating type protein mtA-1 (MTA1) (Sordaria equina).